Consider the following 378-residue polypeptide: Putative methyltransferase spot-1 (378 aa).

The protein belongs to the class IV-like SAM-binding methyltransferase superfamily.

It localises to the cytoplasm. The protein localises to the cytoskeleton. Its subcellular location is the spindle. It is found in the chromosome. The protein resides in the centromere. It localises to the kinetochore. The protein localises to the microtubule organizing center. Its subcellular location is the centrosome. Required for association of the centrosomes with the poles of the bipolar mitotic spindle during metaphase. The chain is Putative methyltransferase spot-1 from Caenorhabditis elegans.